We begin with the raw amino-acid sequence, 539 residues long: Protein lin-14 (539 aa).

Disordered stretches follow at residues 162-230 (PTLP…SNHS) and 262-293 (ETAP…PRKP). 2 stretches are compositionally biased toward polar residues: residues 163-183 (TLPN…GTDD) and 193-214 (SVDS…NQNI). Residues 274–284 (NGTTNGTAKAG) show a composition bias toward low complexity. An involved in sequence-specific DNA-binding region spans residues 296-440 (DDIVKIVRNQ…CRRVRHAKKT (145 aa)).

Cleaved by caspase ced-3 in vitro. High levels in hypodermal, intestinal, body wall muscle, nerve ring, and ventral nerve cord cells of embryos and L1 animals.

It is found in the nucleus. In terms of biological role, heterochronic protein which controls the choice of stage specific cell fates. Involved in the temporal progression of vulval fate patterning, possibly by inhibiting lin-12. Acts as a transcription factor involved in the stage-specific repression of various genes, including insulin/insulin-like growth factor gene ins-33 and neuropeptide-encoding gene nlp-45. Binds to the consensus sequence 5'-[CT]GGA[AG]-3' in the regulatory elements of target genes. Plays a role in governing the developmental timing of male tail tip morphogenesis. Plays a role in controlling the timing of seam cell development during the larval stages. Plays a role in promoting survival at high temperatures in larvae. Involved in maintenance of the architecture of the ventral nerve cord, perhaps acting via modulating expression of the immunoglobulin domain gene zig-4. May specify L2 and later cell fates, creating a temporal switch. Functionally, may be involved in specifying L1 cell fates. In Caenorhabditis elegans, this protein is Protein lin-14.